The chain runs to 665 residues: Methionine--tRNA ligase (665 aa).

Positions Y12 to S22 match the 'HIGH' region motif. The short motif at K308–S312 is the 'KMSKS' region element. Residue K311 coordinates ATP. Residues T562–G665 enclose the tRNA-binding domain.

This sequence belongs to the class-I aminoacyl-tRNA synthetase family. MetG type 2B subfamily. Homodimer.

The protein localises to the cytoplasm. The catalysed reaction is tRNA(Met) + L-methionine + ATP = L-methionyl-tRNA(Met) + AMP + diphosphate. Is required not only for elongation of protein synthesis but also for the initiation of all mRNA translation through initiator tRNA(fMet) aminoacylation. The sequence is that of Methionine--tRNA ligase (metG) from Streptococcus pyogenes serotype M6 (strain ATCC BAA-946 / MGAS10394).